A 58-amino-acid chain; its full sequence is Small ribosomal subunit protein bS21 (58 aa).

It belongs to the bacterial ribosomal protein bS21 family.

This chain is Small ribosomal subunit protein bS21, found in Staphylococcus saprophyticus subsp. saprophyticus (strain ATCC 15305 / DSM 20229 / NCIMB 8711 / NCTC 7292 / S-41).